A 477-amino-acid polypeptide reads, in one-letter code: Argininosuccinate lyase (477 aa).

The segment covering 1-18 (MTTSSHSSEQPTSTQTSG) has biased composition (polar residues). Positions 1-21 (MTTSSHSSEQPTSTQTSGMWG) are disordered.

It belongs to the lyase 1 family. Argininosuccinate lyase subfamily.

The protein localises to the cytoplasm. The catalysed reaction is 2-(N(omega)-L-arginino)succinate = fumarate + L-arginine. Its pathway is amino-acid biosynthesis; L-arginine biosynthesis; L-arginine from L-ornithine and carbamoyl phosphate: step 3/3. In Acinetobacter baylyi (strain ATCC 33305 / BD413 / ADP1), this protein is Argininosuccinate lyase.